A 347-amino-acid chain; its full sequence is Quinolinate synthase (347 aa).

Iminosuccinate-binding residues include histidine 47 and serine 68. Cysteine 113 is a [4Fe-4S] cluster binding site. Residues 139–141 (YAN) and serine 156 contribute to the iminosuccinate site. Cysteine 200 contributes to the [4Fe-4S] cluster binding site. Iminosuccinate-binding positions include 226–228 (HPE) and threonine 243. Cysteine 297 serves as a coordination point for [4Fe-4S] cluster.

The protein belongs to the quinolinate synthase family. Type 1 subfamily. [4Fe-4S] cluster is required as a cofactor.

The protein localises to the cytoplasm. The catalysed reaction is iminosuccinate + dihydroxyacetone phosphate = quinolinate + phosphate + 2 H2O + H(+). It participates in cofactor biosynthesis; NAD(+) biosynthesis; quinolinate from iminoaspartate: step 1/1. Functionally, catalyzes the condensation of iminoaspartate with dihydroxyacetone phosphate to form quinolinate. The polypeptide is Quinolinate synthase (Shigella boydii serotype 4 (strain Sb227)).